Here is a 185-residue protein sequence, read N- to C-terminus: Ribulose bisphosphate carboxylase small subunit, chloroplastic 2 (185 aa).

The transit peptide at 1-45 directs the protein to the chloroplast; that stretch reads MAAVIAKSSVSAAVARPARSSVRPMAALKPAVKAAPVAAPAQANQ. Residue M46 is modified to N-methylmethionine.

Belongs to the RuBisCO small chain family. As to quaternary structure, heterohexadecamer of 8 large and 8 small subunits.

The protein resides in the plastid. Its subcellular location is the chloroplast. The protein localises to the chloroplast stroma. RuBisCO catalyzes two reactions: the carboxylation of D-ribulose 1,5-bisphosphate, the primary event in carbon dioxide fixation, as well as the oxidative fragmentation of the pentose substrate. Both reactions occur simultaneously and in competition at the same active site. Although the small subunit is not catalytic it is essential for maximal activity. The polypeptide is Ribulose bisphosphate carboxylase small subunit, chloroplastic 2 (Chlamydomonas reinhardtii (Chlamydomonas smithii)).